Consider the following 263-residue polypeptide: MRRIGLEALERVLYPVIPVVVTAEHQGRVGGMLAAWWMQASFTPPILAVAIAPERYTYKLVRESGVFAFNLLDFKLVDKAPFLGDVSERLLPGKIREAGLNIVRGEVLGAPLIAEASAAVELELVDVVEAGDHDVFLGEAKAVYTVDDFRGGMWSLETYRPLMYLGRTRRPGPVYRVYLTPRGWERREIEFAGGKLKPLAEKRVRLISRVEEAVKASSSREEAVDAVRRILSEEGLDPSDAEYLVEDALRRAKSYRRRGQSSS.

This sequence belongs to the flavoredoxin family. FMN serves as cofactor.

This is an uncharacterized protein from Aeropyrum pernix (strain ATCC 700893 / DSM 11879 / JCM 9820 / NBRC 100138 / K1).